The sequence spans 567 residues: Zinc finger protein 143 (567 aa).

7 C2H2-type zinc fingers span residues 230-254 (FRCD…ERSH), 260-284 (YQCD…VRTH), 290-314 (YRCS…VRTH), 320-344 (FKCP…IRTH), 350-374 (YYCS…VRIH), 380-404 (YVCT…HVVH), and 410-433 (YNCN…RTAH). Residues 506-520 (SATESGPQHSHNLGG) show a composition bias toward polar residues. The tract at residues 506-525 (SATESGPQHSHNLGGSESRP) is disordered.

It belongs to the GLI C2H2-type zinc-finger protein family.

It is found in the nucleus. Its function is as follows. Transcriptional activator. Activates the gene for selenocysteine tRNA (tRNAsec). Binds to the activator element (AE) motif of the selenocysteine tRNA gene promoter. The sequence is that of Zinc finger protein 143 (znf143) from Xenopus tropicalis (Western clawed frog).